The chain runs to 433 residues: Trigger factor (433 aa).

One can recognise a PPIase FKBP-type domain in the interval 166 to 251 (GDFAVIDFEG…LHEIQERAKP (86 aa)).

The protein belongs to the FKBP-type PPIase family. Tig subfamily.

The protein localises to the cytoplasm. It catalyses the reaction [protein]-peptidylproline (omega=180) = [protein]-peptidylproline (omega=0). Functionally, involved in protein export. Acts as a chaperone by maintaining the newly synthesized protein in an open conformation. Functions as a peptidyl-prolyl cis-trans isomerase. This chain is Trigger factor, found in Aliarcobacter butzleri (strain RM4018) (Arcobacter butzleri).